The following is a 323-amino-acid chain: MPVHSREKKENNHDEMEVDYGENEGSTSEEEETESSSVSEEGDSSEMDDEDCERRRMECLDEMSNLEKQFTDLKDQLYKERLSQVDAKLQEVIAGKAPEYLEPLAALQENMQIRTKVAGIYRELCLESVKNKYECEIQASRQHCESEKLLLYDTVQSELEEKIRRLEEDRHSIDITSELWNDELQSRKKRKDPFSPDKKKPVVVSGPYIVYMLQDLDILEDWTTIRKAMATLGPHRVKPEPPVKLEKHLHSARSEEGRLYYDGEWYGRGQTIYIDKKDECPTSAIITTINHDEVWFKRPDGSKSKLYISQLQKGKYSIKHNHN.

The span at 1-15 (MPVHSREKKENNHDE) shows a compositional bias: basic and acidic residues. The segment at 1 to 56 (MPVHSREKKENNHDEMEVDYGENEGSTSEEEETESSSVSEEGDSSEMDDEDCERRR) is disordered. Residues 16–51 (MEVDYGENEGSTSEEEETESSSVSEEGDSSEMDDED) are compositionally biased toward acidic residues. Coiled-coil stretches lie at residues 50-82 (EDCE…KERL) and 147-178 (EKLL…ITSE).

It belongs to the BRMS1 family.

The protein resides in the nucleus. In terms of biological role, involved in the histone deacetylase (HDAC1)-dependent transcriptional repression activity. The chain is Breast cancer metastasis-suppressor 1-like protein (BRMS1L) from Gallus gallus (Chicken).